Consider the following 365-residue polypeptide: Peptide chain release factor 2 (365 aa).

An N5-methylglutamine modification is found at Q252.

This sequence belongs to the prokaryotic/mitochondrial release factor family. In terms of processing, methylated by PrmC. Methylation increases the termination efficiency of RF2.

The protein localises to the cytoplasm. Peptide chain release factor 2 directs the termination of translation in response to the peptide chain termination codons UGA and UAA. The chain is Peptide chain release factor 2 from Yersinia enterocolitica serotype O:8 / biotype 1B (strain NCTC 13174 / 8081).